A 655-amino-acid polypeptide reads, in one-letter code: MVAPKSHTDDWAPGPFSSKPQRSQLQIFSSVLQTSLLFLLMGLRASGKDSAPTVVSGILGGSVTLPLNISVDTEIENVIWIGPKNALAFARPKENVTIMVKSYLGRLDITKWSYSLCISNLTLNDAGSYKAQINQRNFEVTTEEEFTLFVYEQLQEPQVTMKSVKVSENFSCNITLMCSVKGAEKSVLYSWTPREPHASESNGGSILTVSRTPCDPDLPYICTAQNPVSQRSSLPVHVGQFCTDPGASRGGTTGETVVGVLGEPVTLPLALPACRDTEKVVWLFNTSIISKEREEAATADPLIKSRDPYKNRVWVSSQDCSLKISQLKIEDAGPYHAYVCSEASSVTSMTHVTLLIYRRLRKPKITWSLRHSEDGICRISLTCSVEDGGNTVMYTWTPLQKEAVVSQGESHLNVSWRSSENHPNLTCTASNPVSRSSHQFLSENICSGPERNTKLWIGLFLMVCLLCVGIFSWCIWKRKGRCSVPAFCSSQAEAPADTPEPTAGHTLYSVLSQGYEKLDTPLRPARQQPTPTSDSSSDSNLTTEEDEDRPEVHKPISGRYEVFDQVTQEGAGHDPAPEGQADYDPVTPYVTEVESVVGENTMYAQVFNLQGKTPVSQKEESSATIYCSIRKPQVVPPPQQNDLEIPESPTYENFT.

An N-terminal signal peptide occupies residues 1–47; it reads MVAPKSHTDDWAPGPFSSKPQRSQLQIFSSVLQTSLLFLLMGLRASG. The Ig-like V-type 1 domain occupies 48–158; the sequence is KDSAPTVVSG…FVYEQLQEPQ (111 aa). Residues 48 to 454 are Extracellular-facing; that stretch reads KDSAPTVVSG…ICSGPERNTK (407 aa). Residues N68, N95, N120, N169, and N173 are each glycosylated (N-linked (GlcNAc...) asparagine). One can recognise an Ig-like C2-type 1 domain in the interval 159–235; it reads VTMKSVKVSE…NPVSQRSSLP (77 aa). 2 disulfide bridges follow: C172–C242 and C178–C222. An Ig-like V-type 2 domain is found at 251 to 363; sequence GTTGETVVGV…LLIYRRLRKP (113 aa). N285, N413, and N424 each carry an N-linked (GlcNAc...) asparagine glycan. Positions 364–452 constitute an Ig-like C2-type 2 domain; that stretch reads KITWSLRHSE…ENICSGPERN (89 aa). 2 disulfide bridges follow: C377–C446 and C383–C427. Residues 455-476 traverse the membrane as a helical segment; sequence LWIGLFLMVCLLCVGIFSWCIW. Over 477–655 the chain is Cytoplasmic; the sequence is KRKGRCSVPA…PESPTYENFT (179 aa). Residues 521–556 form a disordered region; the sequence is PLRPARQQPTPTSDSSSDSNLTTEEDEDRPEVHKPI. Residues 530-542 are compositionally biased toward low complexity; it reads TPTSDSSSDSNLT. Short sequence motifs (ITSM) lie at residues 601–606 and 624–629; these read TMYAQV and TIYCSI. At Y603 the chain carries Phosphotyrosine. Residues 633–655 are disordered; it reads QVVPPPQQNDLEIPESPTYENFT.

As to quaternary structure, interacts with SH2D1A, SH2D1B and INPP5D. Interacts (via phosphorylated cytoplasmic domain) with PTPN11; the interaction is blocked by SH2D1A. Increased surface expression on T-cells of systemic lupus erythematosus (SLE) patients.

Its subcellular location is the membrane. The protein localises to the cell membrane. Its function is as follows. Self-ligand receptor of the signaling lymphocytic activation molecule (SLAM) family. SLAM receptors triggered by homo- or heterotypic cell-cell interactions are modulating the activation and differentiation of a wide variety of immune cells and thus are involved in the regulation and interconnection of both innate and adaptive immune response. Activities are controlled by presence or absence of small cytoplasmic adapter proteins, SH2D1A/SAP and/or SH2D1B/EAT-2. May participate in adhesion reactions between T lymphocytes and accessory cells by homophilic interaction. Promotes T-cell differentiation into a helper T-cell Th17 phenotype leading to increased IL-17 secretion; the costimulatory activity requires SH2D1A. Promotes recruitment of RORC to the IL-17 promoter. May be involved in the maintenance of peripheral cell tolerance by serving as a negative regulator of the immune response. May disable autoantibody responses and inhibit IFN-gamma secretion by CD4(+) T-cells. May negatively regulate the size of thymic innate CD8(+) T-cells and the development of invariant natural killer T (iNKT) cells. The polypeptide is T-lymphocyte surface antigen Ly-9 (LY9) (Homo sapiens (Human)).